The primary structure comprises 194 residues: Adenylate kinase (194 aa).

Position 10 to 15 (Gly-10 to Thr-15) interacts with ATP. The NMP stretch occupies residues Ser-30–Val-59. AMP is bound by residues Thr-31, Arg-36, Gln-57–Val-59, Gly-85–Arg-88, and Gln-92. Residues Ser-126–Asp-142 are LID. Arg-127 is a binding site for ATP. The AMP site is built by Arg-139 and Arg-150. An ATP-binding site is contributed by Ala-178.

Belongs to the adenylate kinase family. As to quaternary structure, monomer.

Its subcellular location is the cytoplasm. It carries out the reaction AMP + ATP = 2 ADP. It functions in the pathway purine metabolism; AMP biosynthesis via salvage pathway; AMP from ADP: step 1/1. Its function is as follows. Catalyzes the reversible transfer of the terminal phosphate group between ATP and AMP. Plays an important role in cellular energy homeostasis and in adenine nucleotide metabolism. The chain is Adenylate kinase from Brucella anthropi (strain ATCC 49188 / DSM 6882 / CCUG 24695 / JCM 21032 / LMG 3331 / NBRC 15819 / NCTC 12168 / Alc 37) (Ochrobactrum anthropi).